Consider the following 79-residue polypeptide: uncharacterized protein (79 aa).

This is an uncharacterized protein from Homo sapiens (Human).